Here is a 243-residue protein sequence, read N- to C-terminus: 4-hydroxy-tetrahydrodipicolinate reductase (243 aa).

NAD(+) contacts are provided by residues 9–14 (GANGKM), 78–80 (GTS), and 104–107 (APNF). His-134 acts as the Proton donor/acceptor in catalysis. His-135 lines the (S)-2,3,4,5-tetrahydrodipicolinate pocket. Residue Lys-138 is the Proton donor of the active site. 144–145 (GT) is a binding site for (S)-2,3,4,5-tetrahydrodipicolinate.

Belongs to the DapB family.

It is found in the cytoplasm. The catalysed reaction is (S)-2,3,4,5-tetrahydrodipicolinate + NAD(+) + H2O = (2S,4S)-4-hydroxy-2,3,4,5-tetrahydrodipicolinate + NADH + H(+). The enzyme catalyses (S)-2,3,4,5-tetrahydrodipicolinate + NADP(+) + H2O = (2S,4S)-4-hydroxy-2,3,4,5-tetrahydrodipicolinate + NADPH + H(+). Its pathway is amino-acid biosynthesis; L-lysine biosynthesis via DAP pathway; (S)-tetrahydrodipicolinate from L-aspartate: step 4/4. Functionally, catalyzes the conversion of 4-hydroxy-tetrahydrodipicolinate (HTPA) to tetrahydrodipicolinate. This chain is 4-hydroxy-tetrahydrodipicolinate reductase, found in Legionella pneumophila (strain Lens).